Here is a 414-residue protein sequence, read N- to C-terminus: Glutamyl-tRNA reductase (414 aa).

Substrate contacts are provided by residues 49 to 52 (TCNR), Ser108, 113 to 115 (EPQ), and Gln119. Residue Cys50 is the Nucleophile of the active site. Residue 188 to 193 (GAGQTG) participates in NADP(+) binding.

The protein belongs to the glutamyl-tRNA reductase family. Homodimer.

It carries out the reaction (S)-4-amino-5-oxopentanoate + tRNA(Glu) + NADP(+) = L-glutamyl-tRNA(Glu) + NADPH + H(+). It participates in porphyrin-containing compound metabolism; protoporphyrin-IX biosynthesis; 5-aminolevulinate from L-glutamyl-tRNA(Glu): step 1/2. In terms of biological role, catalyzes the NADPH-dependent reduction of glutamyl-tRNA(Glu) to glutamate 1-semialdehyde (GSA). The protein is Glutamyl-tRNA reductase of Francisella tularensis subsp. tularensis (strain WY96-3418).